Here is a 197-residue protein sequence, read N- to C-terminus: Carbohydrate-binding X8 domain-containing protein (197 aa).

Residues 1 to 19 (MAVLLPLFLLSFMFTYSNA) form the signal peptide. Residues 101–113 (SCLSSSSSNGTPT) show a composition bias toward low complexity. The tract at residues 101-176 (SCLSSSSSNG…TSGDPNGGEE (76 aa)) is disordered. A compositionally biased stretch (polar residues) spans 116-125 (YPSTGNSTTA). Low complexity predominate over residues 126–145 (SPGTTNPSTGNSTNSTLPTN). The span at 146-155 (DKPTSSTITF) shows a compositional bias: polar residues. Positions 156–170 (PDSTTMGPSSSTSGD) are enriched in low complexity. The GPI-anchor amidated asparagine moiety is linked to residue Asn-172. The propeptide at 173–197 (GGEELSVRTTTIILLTTIAAVALRV) is removed in mature form.

Expressed in the sieve elements.

Its subcellular location is the cell membrane. This chain is Carbohydrate-binding X8 domain-containing protein, found in Arabidopsis thaliana (Mouse-ear cress).